Reading from the N-terminus, the 217-residue chain is Small ribosomal subunit protein uS3 (217 aa).

Positions 38–106 (IRKFIDNELK…KVHINVIEIK (69 aa)) constitute a KH type-2 domain.

Belongs to the universal ribosomal protein uS3 family. As to quaternary structure, part of the 30S ribosomal subunit. Forms a tight complex with proteins S10 and S14.

Functionally, binds the lower part of the 30S subunit head. Binds mRNA in the 70S ribosome, positioning it for translation. In Staphylococcus haemolyticus (strain JCSC1435), this protein is Small ribosomal subunit protein uS3.